The primary structure comprises 334 residues: Aspartate carbamoyltransferase catalytic subunit (334 aa).

Carbamoyl phosphate is bound by residues R71 and T72. Residue K99 participates in L-aspartate binding. 3 residues coordinate carbamoyl phosphate: R121, H151, and Q154. The L-aspartate site is built by R184 and R239. Residues G280 and P281 each contribute to the carbamoyl phosphate site.

Belongs to the aspartate/ornithine carbamoyltransferase superfamily. ATCase family. As to quaternary structure, heterododecamer (2C3:3R2) of six catalytic PyrB chains organized as two trimers (C3), and six regulatory PyrI chains organized as three dimers (R2).

It catalyses the reaction carbamoyl phosphate + L-aspartate = N-carbamoyl-L-aspartate + phosphate + H(+). It functions in the pathway pyrimidine metabolism; UMP biosynthesis via de novo pathway; (S)-dihydroorotate from bicarbonate: step 2/3. Functionally, catalyzes the condensation of carbamoyl phosphate and aspartate to form carbamoyl aspartate and inorganic phosphate, the committed step in the de novo pyrimidine nucleotide biosynthesis pathway. The polypeptide is Aspartate carbamoyltransferase catalytic subunit (Pseudomonas fluorescens (strain ATCC BAA-477 / NRRL B-23932 / Pf-5)).